Reading from the N-terminus, the 197-residue chain is dITP/XTP pyrophosphatase (197 aa).

10–15 (TKNQGK) provides a ligand contact to substrate. The Proton acceptor role is filled by D70. D70 is a binding site for Mg(2+). Substrate contacts are provided by residues S71, 151–154 (FGYD), K173, and 178–179 (HR).

The protein belongs to the HAM1 NTPase family. In terms of assembly, homodimer. The cofactor is Mg(2+).

It carries out the reaction XTP + H2O = XMP + diphosphate + H(+). The catalysed reaction is dITP + H2O = dIMP + diphosphate + H(+). It catalyses the reaction ITP + H2O = IMP + diphosphate + H(+). Functionally, pyrophosphatase that catalyzes the hydrolysis of nucleoside triphosphates to their monophosphate derivatives, with a high preference for the non-canonical purine nucleotides XTP (xanthosine triphosphate), dITP (deoxyinosine triphosphate) and ITP. Seems to function as a house-cleaning enzyme that removes non-canonical purine nucleotides from the nucleotide pool, thus preventing their incorporation into DNA/RNA and avoiding chromosomal lesions. The sequence is that of dITP/XTP pyrophosphatase from Symbiobacterium thermophilum (strain DSM 24528 / JCM 14929 / IAM 14863 / T).